The chain runs to 375 residues: Neuropeptide Y receptor type 4 (375 aa).

The Extracellular portion of the chain corresponds to 1–39 (MNTSHLMASLSPAFLQGKNGTNPLDSLYNLSDGCQDSAD). N-linked (GlcNAc...) asparagine glycosylation is found at N2, N19, and N29. A helical transmembrane segment spans residues 40–60 (LLAFIITTYSVETVLGVLGNL). Residues 61–78 (CLIFVTTRQKEKSNVTNL) are Cytoplasmic-facing. A helical transmembrane segment spans residues 79-99 (LIANLAFSDFLMCLICQPLTV). The Extracellular segment spans residues 100–116 (TYTIMDYWIFGEVLCKM). C114 and C201 are joined by a disulfide. The helical transmembrane segment at 117 to 137 (LTFIQCMSVTVSILSLVLVAL) threads the bilayer. At 138–155 (ERHQLIINPTGWKPSISQ) the chain is on the cytoplasmic side. A helical membrane pass occupies residues 156 to 176 (AYLGIVVIWFISCFLSLPFLA). Over 177-211 (NSILNDLFHYNHSKVVEFLEDKVVCFVSWSSDHHR) the chain is Extracellular. A glycan (N-linked (GlcNAc...) asparagine) is linked at N187. A helical transmembrane segment spans residues 212-232 (LIYTTFLLLFQYCVPLAFILV). At 233–262 (CYMRIYQRLQRQRRAFHTHTCSSRVGQMKR) the chain is on the cytoplasmic side. Residues 263–283 (INGMLMAMVTAFAVLWLPLHV) form a helical membrane-spanning segment. Residues 284 to 301 (FNTLEDWYQEAIPACHGN) lie on the Extracellular side of the membrane. Residues 302–322 (LIFLMCHLFAMASTCVNPFIY) traverse the membrane as a helical segment. Residues 323 to 375 (GFLNINFKKDIKALVLTCRCRPPQGEPEPLPLSTVHTDLSKGSMRMGSKSNVM) lie on the Cytoplasmic side of the membrane. The S-palmitoyl cysteine moiety is linked to residue C340.

Belongs to the G-protein coupled receptor 1 family. As to expression, detected in colon and brain.

The protein localises to the cell membrane. Functionally, g protein-coupled receptor for PPY/pancreatic polypeptide/PP that is negatively coupled to cAMP. Has much lower affinity for the NPY/neuropeptide Y and PYY/peptide YY. This chain is Neuropeptide Y receptor type 4 (Npy4r), found in Rattus norvegicus (Rat).